The chain runs to 341 residues: MTDHALLLVNLGSPASTSVADVRSYLNQFLMDPYVIDLPWPVRRLLVSLILIKRPEQSAHAYASIWWDEGSPLVVLSRRLQQQMTAQWTQGPVELAMRYGEPSIESVLTRLATQGIRNVTLAPLYPQFADSTVTTVIEEAKRVVRDKKLDVQFSILQPFYDQPEYLDALVASARPYVEQDYDHLLLSFHGLPERHLTKLDPTGQHCFKDADCCKNASAEVLKTCYRAQCFSVARDFAERMGLPEGKWSVAFQSRLGRAKWIEPYTEARLEALAQQGVKKLLVMCPAFVADCIETLEEIGDRGLEQFREAGGEELVLVPCLNDDPQWAKALNTLCERAPTAL.

The Fe cation site is built by His189 and Glu293.

This sequence belongs to the ferrochelatase family.

Its subcellular location is the cytoplasm. The enzyme catalyses heme b + 2 H(+) = protoporphyrin IX + Fe(2+). Its pathway is porphyrin-containing compound metabolism; protoheme biosynthesis; protoheme from protoporphyrin-IX: step 1/1. In terms of biological role, catalyzes the ferrous insertion into protoporphyrin IX. This Pseudomonas fluorescens (strain SBW25) protein is Ferrochelatase.